The following is a 344-amino-acid chain: tRNA (guanine(26)-N(2))-dimethyltransferase (344 aa).

A Trm1 methyltransferase domain is found at 1–334 (MIVREGSAEI…ASCDLVESLM (334 aa)). S-adenosyl-L-methionine contacts are provided by Arg-35, Arg-60, and Glu-76.

The protein belongs to the class I-like SAM-binding methyltransferase superfamily. Trm1 family.

The catalysed reaction is guanosine(26) in tRNA + 2 S-adenosyl-L-methionine = N(2)-dimethylguanosine(26) in tRNA + 2 S-adenosyl-L-homocysteine + 2 H(+). Dimethylates a single guanine residue at position 26 of a number of tRNAs using S-adenosyl-L-methionine as donor of the methyl groups. This chain is tRNA (guanine(26)-N(2))-dimethyltransferase, found in Thermoplasma acidophilum (strain ATCC 25905 / DSM 1728 / JCM 9062 / NBRC 15155 / AMRC-C165).